The primary structure comprises 1020 residues: Glucan endo-1,3-beta-D-glucosidase (1020 aa).

Positions 1-25 are cleaved as a signal peptide; sequence MKGKNVQLLFALVVIILLFPTGASA. Residues 28 to 251 form a beta-sandwich subdomain region; sequence HAVSVGKGSY…ADYIAIAKLP (224 aa). Residues 28-722 form the GH81 domain; the sequence is HAVSVGKGSY…HWIHNLAELG (695 aa). The tract at residues 252-350 is alpha/beta subdomain; sequence EKDGNMLAKF…EGKRFTTELT (99 aa). Residues 360–722 form a (alpha/beta)6 barrel subdomain region; that stretch reads DLGDYDRERL…HWIHNLAELG (363 aa). Tyrosine 387, lysine 391, histidine 458, aspartate 466, histidine 470, aspartate 530, asparagine 540, glutamate 542, glutamate 546, glutamate 699, and arginine 704 together coordinate (1,3-beta-D-glucosyl)n. Residue aspartate 466 is part of the active site. Active-site residues include glutamate 542 and glutamate 546. The tract at residues 771 to 790 is disordered; sequence HSFNIGNGDGPTNPDPSEPD. Positions 796 to 922 constitute a CBM6 domain; the sequence is ERIQAEAYDA…LMNVNWFVFR (127 aa). 6 residues coordinate (1,3-beta-D-glucosyl)n: glutamate 812, tryptophan 825, aspartate 853, asparagine 878, aspartate 912, and asparagine 915. In terms of domain architecture, CBM56 spans 928 to 1020; it reads NGDSHTHPDY…YTTEWFTYSR (93 aa).

It belongs to the glycosyl hydrolase 81 family.

The protein resides in the secreted. It catalyses the reaction Hydrolysis of (1-&gt;3)-beta-D-glucosidic linkages in (1-&gt;3)-beta-D-glucans.. Cleaves internal linkages in 1,3-beta-glucan. May contribute to plant biomass degradation. This Halalkalibacterium halodurans (strain ATCC BAA-125 / DSM 18197 / FERM 7344 / JCM 9153 / C-125) (Bacillus halodurans) protein is Glucan endo-1,3-beta-D-glucosidase.